Consider the following 134-residue polypeptide: Small ribosomal subunit protein uS12 (134 aa).

The residue at position 89 (Asp89) is a 3-methylthioaspartic acid. Positions 109–134 (KRNVSRSKYGAKKGKAGAAPTTGKKK) are disordered. Positions 111–123 (NVSRSKYGAKKGK) are enriched in basic residues. Low complexity predominate over residues 124–134 (AGAAPTTGKKK).

This sequence belongs to the universal ribosomal protein uS12 family. Part of the 30S ribosomal subunit. Contacts proteins S8 and S17. May interact with IF1 in the 30S initiation complex.

Its function is as follows. With S4 and S5 plays an important role in translational accuracy. Functionally, interacts with and stabilizes bases of the 16S rRNA that are involved in tRNA selection in the A site and with the mRNA backbone. Located at the interface of the 30S and 50S subunits, it traverses the body of the 30S subunit contacting proteins on the other side and probably holding the rRNA structure together. The combined cluster of proteins S8, S12 and S17 appears to hold together the shoulder and platform of the 30S subunit. This Wolinella succinogenes (strain ATCC 29543 / DSM 1740 / CCUG 13145 / JCM 31913 / LMG 7466 / NCTC 11488 / FDC 602W) (Vibrio succinogenes) protein is Small ribosomal subunit protein uS12.